Here is a 262-residue protein sequence, read N- to C-terminus: uncharacterized protein (262 aa).

It belongs to the BtpA family.

This is an uncharacterized protein from Pyrococcus furiosus (strain ATCC 43587 / DSM 3638 / JCM 8422 / Vc1).